Consider the following 622-residue polypeptide: Low affinity potassium transport system protein Kup (622 aa).

A run of 12 helical transmembrane segments spans residues 9–29 (LPAV…TSPL), 52–72 (FLSL…LLFV), 99–119 (TPVL…EVVI), 137–157 (PSLQ…LFFI), 165–185 (VGKL…VLGV), 213–233 (VSFF…ALYA), 247–267 (WFSA…ALLL), 276–296 (PFFL…ATLA), 337–357 (IYIP…IVSF), 363–383 (LAAA…ILSC), 394–414 (LLIV…MFAA), and 419–439 (IFSG…AMIT).

This sequence belongs to the HAK/KUP transporter (TC 2.A.72) family.

The protein localises to the cell inner membrane. The catalysed reaction is K(+)(in) + H(+)(in) = K(+)(out) + H(+)(out). Its function is as follows. Responsible for the low-affinity transport of potassium into the cell. Likely operates as a K(+):H(+) symporter. The chain is Low affinity potassium transport system protein Kup from Sodalis glossinidius (strain morsitans).